We begin with the raw amino-acid sequence, 548 residues long: Eukaryotic translation initiation factor 3 subunit D (548 aa).

Lys53 bears the N6-acetyllysine mark. Ser161 is subject to Phosphoserine. An RNA gate region spans residues 285 to 299; it reads DFDLLTVSETANEPP. The disordered stretch occupies residues 523–548; the sequence is PDGTFSSDEDEEEEEEEEEEEEEEET. Residues Ser528 and Ser529 each carry the phosphoserine modification. A compositionally biased stretch (acidic residues) spans 529–548; it reads SDEDEEEEEEEEEEEEEEET.

Belongs to the eIF-3 subunit D family. In terms of assembly, component of the eukaryotic translation initiation factor 3 (eIF-3) complex, which is composed of 13 subunits: EIF3A, EIF3B, EIF3C, EIF3D, EIF3E, EIF3F, EIF3G, EIF3H, EIF3I, EIF3J, EIF3K, EIF3L and EIF3M. The eIF-3 complex appears to include 3 stable modules: module A is composed of EIF3A, EIF3B, EIF3G and EIF3I; module B is composed of EIF3F, EIF3H, and EIF3M; and module C is composed of EIF3C, EIF3D, EIF3E, EIF3K and EIF3L. EIF3C of module C binds EIF3B of module A and EIF3H of module B, thereby linking the three modules. EIF3J is a labile subunit that binds to the eIF-3 complex via EIF3B. The eIF-3 complex interacts with RPS6KB1 under conditions of nutrient depletion. Mitogenic stimulation leads to binding and activation of a complex composed of MTOR and RPTOR, leading to phosphorylation and release of RPS6KB1 and binding of EIF4B to eIF-3.

The protein localises to the cytoplasm. MRNA cap-binding component of the eukaryotic translation initiation factor 3 (eIF-3) complex, a complex required for several steps in the initiation of protein synthesis of a specialized repertoire of mRNAs. The eIF-3 complex associates with the 40S ribosome and facilitates the recruitment of eIF-1, eIF-1A, eIF-2:GTP:methionyl-tRNAi and eIF-5 to form the 43S pre-initiation complex (43S PIC). The eIF-3 complex stimulates mRNA recruitment to the 43S PIC and scanning of the mRNA for AUG recognition. The eIF-3 complex is also required for disassembly and recycling of post-termination ribosomal complexes and subsequently prevents premature joining of the 40S and 60S ribosomal subunits prior to initiation. The eIF-3 complex specifically targets and initiates translation of a subset of mRNAs involved in cell proliferation, including cell cycling, differentiation and apoptosis, and uses different modes of RNA stem-loop binding to exert either translational activation or repression. In the eIF-3 complex, EIF3D specifically recognizes and binds the 7-methylguanosine cap of a subset of mRNAs. The protein is Eukaryotic translation initiation factor 3 subunit D of Macaca fascicularis (Crab-eating macaque).